Reading from the N-terminus, the 305-residue chain is Serine/threonine-protein kinase 16 (305 aa).

Residue G2 is the site of N-myristoyl glycine attachment. 2 S-palmitoyl cysteine lipidation sites follow: C6 and C8. In terms of domain architecture, Protein kinase spans 20–293 (YLFVQKLGEG…PVLLSQLEAL (274 aa)). Residues 26–34 (LGEGGFSYV) and K49 each bind ATP. D148 (proton acceptor) is an active-site residue. Residues 166–202 (DLGSMNQACIQVEGSRQALALQDWAAQRCTISYRAPE) are activation loop. At S197 the chain carries Phosphoserine; by autocatalysis. Y198 carries the phosphotyrosine; by autocatalysis modification.

This sequence belongs to the protein kinase superfamily. Ser/Thr protein kinase family. As to quaternary structure, monomer. Interacts with DRG1 (via its N-terminal); the interaction phosphorylates DRG1. Post-translationally, mainly autophosphorylated on serine/threonine residues. Also autophosphorylated on Tyr-198. Expressed in heart, liver, brain, spleen, lung, skeletal muscle, kidney and testis.

The protein localises to the cytoplasm. It localises to the perinuclear region. The protein resides in the membrane. The catalysed reaction is L-seryl-[protein] + ATP = O-phospho-L-seryl-[protein] + ADP + H(+). The enzyme catalyses L-threonyl-[protein] + ATP = O-phospho-L-threonyl-[protein] + ADP + H(+). It catalyses the reaction L-tyrosyl-[protein] + ATP = O-phospho-L-tyrosyl-[protein] + ADP + H(+). In terms of biological role, membrane-associated protein kinase that phosphorylates on serine and threonine residues. In vitro substrates include DRG1, ENO1 and EIF4EBP1. Also autophosphorylates. May be involved in secretory vesicle trafficking or intracellular signaling. May have a role in regulating stromal-epithelial interactions that occur during ductal morphogenesis in the mammary gland. May be involved in TGF-beta signaling. Able to autophosphorylate on Tyr residue; it is however unclear whether it has tyrosine-protein kinase toward other proteins. This Rattus norvegicus (Rat) protein is Serine/threonine-protein kinase 16 (Stk16).